Consider the following 373-residue polypeptide: Histidinol-phosphate aminotransferase (373 aa).

Position 231 is an N6-(pyridoxal phosphate)lysine (Lys231).

Belongs to the class-II pyridoxal-phosphate-dependent aminotransferase family. Histidinol-phosphate aminotransferase subfamily. Requires pyridoxal 5'-phosphate as cofactor.

The catalysed reaction is L-histidinol phosphate + 2-oxoglutarate = 3-(imidazol-4-yl)-2-oxopropyl phosphate + L-glutamate. The protein operates within amino-acid biosynthesis; L-histidine biosynthesis; L-histidine from 5-phospho-alpha-D-ribose 1-diphosphate: step 7/9. This is Histidinol-phosphate aminotransferase (hisC) from Methanocaldococcus jannaschii (strain ATCC 43067 / DSM 2661 / JAL-1 / JCM 10045 / NBRC 100440) (Methanococcus jannaschii).